A 126-amino-acid polypeptide reads, in one-letter code: Histone H2B type 1-K (126 aa).

Residues Met1 to Lys12 show a composition bias toward low complexity. Residues Met1–Glu36 are disordered. Pro2 bears the N-acetylproline mark. ADP-ribosyl glutamic acid is present on Glu3. Residue Lys6 is modified to N6-(2-hydroxyisobutyryl)lysine; alternate. At Lys6 the chain carries N6-(beta-hydroxybutyryl)lysine; alternate. Lys6 bears the N6-acetyllysine; alternate mark. Lys6 bears the N6-butyryllysine; alternate mark. Lys6 carries the post-translational modification N6-crotonyllysine; alternate. Lys6 is modified (N6-lactoyllysine; alternate). Lys6 is covalently cross-linked (Glycyl lysine isopeptide (Lys-Gly) (interchain with G-Cter in SUMO2); alternate). Ser7 carries the post-translational modification ADP-ribosylserine. Residue Lys12 is modified to N6-(beta-hydroxybutyryl)lysine; alternate. N6-acetyllysine; alternate is present on residues Lys12 and Lys13. 2 positions are modified to N6-crotonyllysine; alternate: Lys12 and Lys13. An N6-lactoyllysine; alternate modification is found at Lys12. N6-(2-hydroxyisobutyryl)lysine; alternate is present on Lys13. Ser15 is subject to Phosphoserine; by STK4/MST1. N6-acetyllysine; alternate is present on residues Lys16, Lys17, Lys21, and Lys24. N6-crotonyllysine; alternate occurs at positions 16, 17, 21, and 24. 4 positions are modified to N6-lactoyllysine; alternate: Lys16, Lys17, Lys21, and Lys24. Lys17 carries the post-translational modification N6-glutaryllysine; alternate. N6-(2-hydroxyisobutyryl)lysine; alternate occurs at positions 21 and 24. Lys21 carries the N6-(beta-hydroxybutyryl)lysine; alternate modification. Lys21 carries the N6-butyryllysine; alternate modification. Lys21 participates in a covalent cross-link: Glycyl lysine isopeptide (Lys-Gly) (interchain with G-Cter in SUMO2); alternate. Lys25 bears the N6-(2-hydroxyisobutyryl)lysine mark. Lys35 carries the N6-(2-hydroxyisobutyryl)lysine; alternate modification. Position 35 is an N6-(beta-hydroxybutyryl)lysine; alternate (Lys35). Position 35 is an N6-crotonyllysine; alternate (Lys35). Position 35 is an N6-glutaryllysine; alternate (Lys35). Lys35 bears the N6-succinyllysine; alternate mark. Residue Lys35 forms a Glycyl lysine isopeptide (Lys-Gly) (interchain with G-Cter in ubiquitin); alternate linkage. Glu36 is modified (polyADP-ribosyl glutamic acid). Ser37 carries the phosphoserine; by AMPK modification. Lys44, Lys47, and Lys58 each carry N6-(2-hydroxyisobutyryl)lysine; alternate. Lys44 is subject to N6-lactoyllysine; alternate. N6-glutaryllysine; alternate is present on residues Lys44 and Lys47. Lys47 is subject to N6-methyllysine; alternate. Lys58 bears the N6,N6-dimethyllysine; alternate mark. Position 80 is a dimethylated arginine (Arg80). Position 86 is an N6-(2-hydroxyisobutyryl)lysine; alternate (Lys86). Position 86 is an N6-acetyllysine; alternate (Lys86). An N6-lactoyllysine; alternate modification is found at Lys86. Lys86 carries the N6,N6,N6-trimethyllysine; alternate modification. Omega-N-methylarginine is present on residues Arg87 and Arg93. Lys109 is subject to N6-(2-hydroxyisobutyryl)lysine; alternate. Lys109 bears the N6-lactoyllysine; alternate mark. Lys109 carries the post-translational modification N6-glutaryllysine; alternate. The residue at position 109 (Lys109) is an N6-methyllysine; alternate. An O-linked (GlcNAc) serine glycan is attached at Ser113. Position 116 is a phosphothreonine (Thr116). N6-(2-hydroxyisobutyryl)lysine; alternate occurs at positions 117 and 121. Residue Lys117 is modified to N6-(beta-hydroxybutyryl)lysine; alternate. N6-lactoyllysine; alternate occurs at positions 117 and 121. N6-glutaryllysine; alternate occurs at positions 117 and 121. N6-succinyllysine; alternate occurs at positions 117 and 121. Lys117 is subject to N6-methylated lysine; alternate. Lys121 participates in a covalent cross-link: Glycyl lysine isopeptide (Lys-Gly) (interchain with G-Cter in ubiquitin); alternate.

It belongs to the histone H2B family. As to quaternary structure, the nucleosome is a histone octamer containing two molecules each of H2A, H2B, H3 and H4 assembled in one H3-H4 heterotetramer and two H2A-H2B heterodimers. The octamer wraps approximately 147 bp of DNA. Post-translationally, monoubiquitination at Lys-35 (H2BK34Ub) by the MSL1/MSL2 dimer is required for histone H3 'Lys-4' (H3K4me) and 'Lys-79' (H3K79me) methylation and transcription activation at specific gene loci, such as HOXA9 and MEIS1 loci. Similarly, monoubiquitination at Lys-121 (H2BK120Ub) by the RNF20/40 complex gives a specific tag for epigenetic transcriptional activation and is also prerequisite for histone H3 'Lys-4' and 'Lys-79' methylation. It also functions cooperatively with the FACT dimer to stimulate elongation by RNA polymerase II. H2BK120Ub also acts as a regulator of mRNA splicing: deubiquitination by USP49 is required for efficient cotranscriptional splicing of a large set of exons. In terms of processing, phosphorylated on Ser-15 (H2BS14ph) by STK4/MST1 during apoptosis; which facilitates apoptotic chromatin condensation. Also phosphorylated on Ser-15 in response to DNA double strand breaks (DSBs), and in correlation with somatic hypermutation and immunoglobulin class-switch recombination. Phosphorylation at Ser-37 (H2BS36ph) by AMPK in response to stress promotes transcription. GlcNAcylation at Ser-113 promotes monoubiquitination of Lys-121. It fluctuates in response to extracellular glucose, and associates with transcribed genes. Post-translationally, ADP-ribosylated by PARP1 or PARP2 on Ser-7 (H2BS6ADPr) in response to DNA damage. H2BS6ADPr promotes recruitment of CHD1L. Mono-ADP-ribosylated on Glu-3 (H2BE2ADPr) by PARP3 in response to single-strand breaks. Poly ADP-ribosylation on Glu-36 (H2BE35ADPr) by PARP1 regulates adipogenesis: it inhibits phosphorylation at Ser-37 (H2BS36ph), thereby blocking expression of pro-adipogenetic genes. In terms of processing, crotonylation (Kcr) is specifically present in male germ cells and marks testis-specific genes in post-meiotic cells, including X-linked genes that escape sex chromosome inactivation in haploid cells. Crotonylation marks active promoters and enhancers and confers resistance to transcriptional repressors. It is also associated with post-meiotically activated genes on autosomes. Lactylated in macrophages by EP300/P300 by using lactoyl-CoA directly derived from endogenous or exogenous lactate, leading to stimulates gene transcription.

It is found in the nucleus. The protein localises to the chromosome. In terms of biological role, core component of nucleosome. Nucleosomes wrap and compact DNA into chromatin, limiting DNA accessibility to the cellular machineries which require DNA as a template. Histones thereby play a central role in transcription regulation, DNA repair, DNA replication and chromosomal stability. DNA accessibility is regulated via a complex set of post-translational modifications of histones, also called histone code, and nucleosome remodeling. The protein is Histone H2B type 1-K of Macaca fascicularis (Crab-eating macaque).